The sequence spans 229 residues: Putative N-acetylmannosamine-6-phosphate 2-epimerase (229 aa).

This sequence belongs to the NanE family.

The enzyme catalyses an N-acyl-D-glucosamine 6-phosphate = an N-acyl-D-mannosamine 6-phosphate. It functions in the pathway amino-sugar metabolism; N-acetylneuraminate degradation; D-fructose 6-phosphate from N-acetylneuraminate: step 3/5. Converts N-acetylmannosamine-6-phosphate (ManNAc-6-P) to N-acetylglucosamine-6-phosphate (GlcNAc-6-P). This Pediococcus pentosaceus (strain ATCC 25745 / CCUG 21536 / LMG 10740 / 183-1w) protein is Putative N-acetylmannosamine-6-phosphate 2-epimerase.